A 429-amino-acid chain; its full sequence is Adenylosuccinate synthetase (429 aa).

GTP is bound by residues 12–18 (GDEGKGK) and 40–42 (GHT). The active-site Proton acceptor is the D13. D13 and G40 together coordinate Mg(2+). Residues 13–16 (DEGK), 38–41 (NAGH), T128, R142, Q223, T238, and R302 contribute to the IMP site. Residue H41 is the Proton donor of the active site. Residue 298 to 304 (TTTGRPR) participates in substrate binding. Residues R304, 330–332 (SID), and 412–414 (SVG) each bind GTP.

The protein belongs to the adenylosuccinate synthetase family. In terms of assembly, homodimer. It depends on Mg(2+) as a cofactor.

It localises to the cytoplasm. It carries out the reaction IMP + L-aspartate + GTP = N(6)-(1,2-dicarboxyethyl)-AMP + GDP + phosphate + 2 H(+). It functions in the pathway purine metabolism; AMP biosynthesis via de novo pathway; AMP from IMP: step 1/2. Its function is as follows. Plays an important role in the de novo pathway of purine nucleotide biosynthesis. Catalyzes the first committed step in the biosynthesis of AMP from IMP. In Lysinibacillus sphaericus (strain C3-41), this protein is Adenylosuccinate synthetase.